Here is a 264-residue protein sequence, read N- to C-terminus: Apolipoprotein A-I (264 aa).

A signal peptide spans 1–18 (MKAVVLAVAVLFLTGSQA). Repeat copies occupy residues 67 to 88 (LNLLENWDTFGSTFGRLQEQLG) and 89 to 110 (PVTREFWDSLEKDTDWLRQEMN). Residues 67–264 (LNLLENWDTF…DEATQKLNTQ (198 aa)) are 10 X approximate tandem repeats. Met109 carries the post-translational modification Methionine sulfoxide. The 3; half-length repeat unit spans residues 111-121 (KDLEEVKQKVQ). 3 repeat units span residues 122-143 (PYLDEFQKKWEEEVERYRPKVE), 144-165 (PLGAQLREGARQKLEELQKQLV), and 166-187 (PLGEDLRDRARLHVDALRTKLA). A 7; truncated repeat occupies 188–207 (PYSDQMRDRLAERLTALRDN). A Methionine sulfoxide modification is found at Met193. Repeat unit 8 spans residues 208-229 (PKLAEYHARATEHLKKLGEKTK). One copy of the 9; half-length repeat lies at 230-240 (PTLEDLRQGLM). Residue Met240 is modified to Methionine sulfoxide. Residues 241-264 (PWLESLKAKALSVLDEATQKLNTQ) form repeat 10.

This sequence belongs to the apolipoprotein A1/A4/E family. Homodimer. Interacts with APOA1BP and CLU. Component of a sperm activating protein complex (SPAP), consisting of APOA1, an immunoglobulin heavy chain, an immunoglobulin light chain and albumin. Interacts with NDRG1. Interacts with SCGB3A2. Interacts with NAXE and YJEFN3. Glycosylated. In terms of processing, palmitoylated. Post-translationally, phosphorylation sites are present in the extracellular medium.

Its subcellular location is the secreted. In terms of biological role, participates in the reverse transport of cholesterol from tissues to the liver for excretion by promoting cholesterol efflux from tissues and by acting as a cofactor for the lecithin cholesterol acyltransferase (LCAT). As part of the SPAP complex, activates spermatozoa motility. In Nannospalax galili (Northern Israeli blind subterranean mole rat), this protein is Apolipoprotein A-I (Apoa1).